Reading from the N-terminus, the 175-residue chain is ATP synthase subunit delta (175 aa).

This sequence belongs to the ATPase delta chain family. F-type ATPases have 2 components, F(1) - the catalytic core - and F(0) - the membrane proton channel. F(1) has five subunits: alpha(3), beta(3), gamma(1), delta(1), epsilon(1). F(0) has three main subunits: a(1), b(2) and c(10-14). The alpha and beta chains form an alternating ring which encloses part of the gamma chain. F(1) is attached to F(0) by a central stalk formed by the gamma and epsilon chains, while a peripheral stalk is formed by the delta and b chains.

The protein resides in the cell inner membrane. In terms of biological role, f(1)F(0) ATP synthase produces ATP from ADP in the presence of a proton or sodium gradient. F-type ATPases consist of two structural domains, F(1) containing the extramembraneous catalytic core and F(0) containing the membrane proton channel, linked together by a central stalk and a peripheral stalk. During catalysis, ATP synthesis in the catalytic domain of F(1) is coupled via a rotary mechanism of the central stalk subunits to proton translocation. Functionally, this protein is part of the stalk that links CF(0) to CF(1). It either transmits conformational changes from CF(0) to CF(1) or is implicated in proton conduction. The polypeptide is ATP synthase subunit delta (Stenotrophomonas maltophilia (strain R551-3)).